The chain runs to 117 residues: B-enzyme (117 aa).

The active site involves Asp89.

It carries out the reaction Hydrolysis of (1-&gt;4)-beta-linkages between N-acetylmuramic acid and N-acetyl-D-glucosamine residues in a peptidoglycan and between N-acetyl-D-glucosamine residues in chitodextrins.. In Bacillus subtilis, this protein is B-enzyme (lyzB).